Reading from the N-terminus, the 592-residue chain is MPDTILVAVAWPYANGPFHVGHIAGAYLPADVFARYHRLRGHRTLMVSGSDCHGTPITIAAEREGITPQDVIRRYHPTFLKTFQALGISFDLFTQTYTDNHYRVTTDMFLRLLENGYLYKETMVGSYSETLGRFLPDRFVEGTCPNCGYPRARGDQCDSCGHLHDPQDLIAPRSVLDGAPVTFRETEHFFLDLAKLEPQLRAWIESVDRSYWRANTLLFTQNWLREGLRGRAITRDLEWGVPVPVDDPAFKDKRIYVWFDAVIGYYSASVEWAERTGAPDAWKDWWVCLPDGSAPARSYYFIGKDNIPFHTIIWPAMLIGYGNLALPYDVPANEFLNLEGDKMSTSRNWALWAPEIEDRYQPDAIRYYLIANGPETRDSNWSWADFVQRVNSELVATWGNLANRVLSITHRNFGAVPQPGELTDADRQLIAATQQTFESVTALLDGVKLRAALSEAMALAQTANQYLSEQEPWKLVRHDQERAATVLFVALRTVDTLKVLFCPFLPFSSQRLHELLGYTGTIAPQPHVEETTAPDGLPRLVLTGDYRASAGAWRISVLPPGQPIQPPTPLFQKLDEAIIAEELARLRAKVRL.

The 'HIGH' region motif lies at 12 to 22; it reads PYANGPFHVGH. Positions 144, 147, 157, and 160 each coordinate Zn(2+). Residues 342 to 346 carry the 'KMSKS' region motif; it reads KMSTS. Residue threonine 345 participates in ATP binding.

The protein belongs to the class-I aminoacyl-tRNA synthetase family. MetG type 1 subfamily. As to quaternary structure, monomer. Zn(2+) serves as cofactor.

The protein resides in the cytoplasm. The enzyme catalyses tRNA(Met) + L-methionine + ATP = L-methionyl-tRNA(Met) + AMP + diphosphate. Is required not only for elongation of protein synthesis but also for the initiation of all mRNA translation through initiator tRNA(fMet) aminoacylation. The sequence is that of Methionine--tRNA ligase from Roseiflexus castenholzii (strain DSM 13941 / HLO8).